We begin with the raw amino-acid sequence, 323 residues long: MTRSTRQRERETAAKQEEEEDSEEGVRECPECGSDNLVKSSDRAELVCNDCGLVVEEEQIDPGPEWRAFNHQERQEKSRVGAPTTQTMHDKGLTTTIDWKDKDAYGRSISSKKRSQMHRLRKWQERIRTKDAGERNLQFALSEIDRMASALGVPRSVREVASVIYRRALKEDLIRGRSIEGVATSALYAACRKEGIPRSLEEISEVSRVERKEIGRTYRYISQELGLEMKPVDPKKYVPRFCSELELTEEVQSKANEIIETTAEEGLLSGKSPTGYAAAAIYAASLLCNEKKTQREVADVAQVTEVTIRNRYQEQIEAMGIHG.

The segment covering 1–16 has biased composition (basic and acidic residues); sequence MTRSTRQRERETAAKQ. The segment at 1 to 35 is disordered; sequence MTRSTRQRERETAAKQEEEEDSEEGVRECPECGSD. The segment at 24–56 adopts a TFIIB-type zinc-finger fold; that stretch reads EGVRECPECGSDNLVKSSDRAELVCNDCGLVVE. Cysteine 29, cysteine 32, cysteine 48, and cysteine 51 together coordinate Zn(2+). Tandem repeats lie at residues 142 to 225 and 236 to 317.

The protein belongs to the TFIIB family.

Its function is as follows. Stabilizes TBP binding to an archaeal box-A promoter. Also responsible for recruiting RNA polymerase II to the pre-initiation complex (DNA-TBP-TFIIB). This chain is Transcription initiation factor IIB 7, found in Halobacterium salinarum (strain ATCC 700922 / JCM 11081 / NRC-1) (Halobacterium halobium).